The sequence spans 186 residues: DNA-directed RNA polymerase 22 kDa subunit (186 aa).

It belongs to the poxviridae DNA-directed RNA polymerase 22 kDa subunit family. The DNA-dependent RNA polymerase used for intermediate and late genes expression consists of eight subunits Rpo30/OPG66, Rpo7/OPG90, Rpo22/OPG103, Rpo147/OPG105, Rpo18/OPG119, Rpo19/OPG131, Rpo132/OPG151 and Rpo35/OPG156. The same holoenzyme, with the addition of the transcription-specificity factor OPG109, is used for early gene expression.

Its subcellular location is the virion. The catalysed reaction is RNA(n) + a ribonucleoside 5'-triphosphate = RNA(n+1) + diphosphate. Functionally, part of the DNA-dependent RNA polymerase which catalyzes the transcription of viral DNA into RNA using the four ribonucleoside triphosphates as substrates. Responsible for the transcription of early, intermediate and late genes. DNA-dependent RNA polymerase associates with the early transcription factor (ETF), itself composed of OPG118 and OPG133, thereby allowing the early genes transcription. Late transcription, and probably also intermediate transcription, require newly synthesized RNA polymerase. The sequence is that of DNA-directed RNA polymerase 22 kDa subunit (OPG103) from Vertebrata (FPV).